Here is a 599-residue protein sequence, read N- to C-terminus: Elongation factor 4 (599 aa).

The tr-type G domain occupies 3–185 (KNIRNFSIIA…AIVERIPPPS (183 aa)). Residues 15 to 20 (DHGKST) and 132 to 135 (NKID) contribute to the GTP site.

It belongs to the TRAFAC class translation factor GTPase superfamily. Classic translation factor GTPase family. LepA subfamily.

The protein localises to the cell membrane. It catalyses the reaction GTP + H2O = GDP + phosphate + H(+). Required for accurate and efficient protein synthesis under certain stress conditions. May act as a fidelity factor of the translation reaction, by catalyzing a one-codon backward translocation of tRNAs on improperly translocated ribosomes. Back-translocation proceeds from a post-translocation (POST) complex to a pre-translocation (PRE) complex, thus giving elongation factor G a second chance to translocate the tRNAs correctly. Binds to ribosomes in a GTP-dependent manner. The polypeptide is Elongation factor 4 (Syntrophomonas wolfei subsp. wolfei (strain DSM 2245B / Goettingen)).